A 680-amino-acid polypeptide reads, in one-letter code: NADPH--cytochrome P450 reductase (680 aa).

Residues 1-5 (MALDK) are Lumenal-facing. A helical transmembrane segment spans residues 6–23 (LDLYVIITLVVAIAAYFA). The Cytoplasmic portion of the chain corresponds to 24 to 680 (KNQFLDQQQD…VQNRYQEDVW (657 aa)). The region spanning 60–204 (TLLLFGSQTG…DFLAWKDNVF (145 aa)) is the Flavodoxin-like domain. FMN-binding positions include 66–71 (SQTGTA), 117–120 (ATYG), 152–161 (LGNSTYEFFN), and Asp-187. The FAD-binding FR-type domain occupies 264-509 (THPFLARIVK…NGPRGKFSKF (246 aa)). Arg-283 contributes to the NADP(+) binding site. FAD contacts are provided by residues 439 to 442 (RYYS), 457 to 459 (TAV), and 473 to 476 (GVVT). Residues Thr-537, 599–600 (SR), 606–610 (KVYVQ), and Asp-642 each bind NADP(+). Residue Trp-680 coordinates FAD.

It belongs to the NADPH--cytochrome P450 reductase family. The protein in the N-terminal section; belongs to the flavodoxin family. This sequence in the C-terminal section; belongs to the flavoprotein pyridine nucleotide cytochrome reductase family. Requires FAD as cofactor. It depends on FMN as a cofactor.

Its subcellular location is the endoplasmic reticulum membrane. The protein localises to the mitochondrion outer membrane. It is found in the cell membrane. The enzyme catalyses 2 oxidized [cytochrome P450] + NADPH = 2 reduced [cytochrome P450] + NADP(+) + H(+). In terms of biological role, this enzyme is required for electron transfer from NADP to cytochrome P450 in microsomes. It can also provide electron transfer to heme oxygenase and cytochrome B5. Involved in ergosterol biosynthesis. This Candida tropicalis (Yeast) protein is NADPH--cytochrome P450 reductase.